Reading from the N-terminus, the 310-residue chain is Isoflavone reductase homolog A622 (310 aa).

NADP(+)-binding positions include 13 to 19 (GGTGYIG), arginine 38, and lysine 47. Catalysis depends on lysine 135, which acts as the Proton acceptor. Arginine 139 contributes to the NADP(+) binding site.

Belongs to the NmrA-type oxidoreductase family. Isoflavone reductase subfamily. As to quaternary structure, monomer.

It is found in the cytoplasm. It participates in alkaloid biosynthesis; nicotine biosynthesis. NADPH-binding protein. Involved in the biosynthesis of pyridine alkaloid natural products, leading mainly to the production of anabasine, anatabine, nicotine and nornicotine, effective deterrents against herbivores with antiparasitic and pesticide properties (neurotoxins); nornicotine serves as the precursor in the synthesis of the carcinogen compound N'-nitrosonornicotine (NNN). Reductase involved in a late step of tobacco alkaloid biosynthesis. Triggers either the formation of a nicotinic acid-derived precursor or the final condensation reaction of tobacco alkaloids. This is Isoflavone reductase homolog A622 from Nicotiana glauca (Glaucous tobacco).